We begin with the raw amino-acid sequence, 245 residues long: Ninjurin-A (245 aa).

At 1–170 the chain is on the extracellular side; sequence MSNLEHITLE…TSSQHPYFYP (170 aa). 2 N-linked (GlcNAc...) asparagine glycosylation sites follow: N19 and N28. Residues 32-101 are disordered; sequence HSYGGAIDGR…NVNVNVPNGG (70 aa). Over residues 92–101 the composition is skewed to low complexity; it reads NVNVNVPNGG. The segment at 135–146 is helix alpha1; it reads KKTLAQGMMDLA. The tract at residues 149-165 is helix alpha2; that stretch reads SANANQLRYVLETSSQH. A helical transmembrane segment spans residues 171–191; sequence SLLFISLSIIFQIAVGVGLIL. At 192 to 211 the chain is on the cytoplasmic side; the sequence is NGQYNIKNGHDICRANRINN. The helical transmembrane segment at 212 to 232 threads the bilayer; sequence YTVSGIFIVTVVNVLISAFTV. At 233 to 245 the chain is on the extracellular side; it reads DRDTVPALPANTT.

Belongs to the ninjurin family. In terms of assembly, homooligomer. Post-translationally, cleaved by Mmp1 protease to generate the Secreted ninjurin-A form.

Its subcellular location is the cell membrane. The protein resides in the secreted. Functionally, effector of non-apoptotic necrotic cell death that mediates plasma membrane rupture (cytolysis): oligomerizes in response to death stimuli and promotes plasma membrane rupture by introducing hydrophilic faces of 2 alpha helices into the hydrophobic membrane, leading to release intracellular molecules that propagate the inflammatory response. Also acts as a homophilic transmembrane adhesion molecule that promotes cell adhesion by mediating homophilic interactions via its extracellular region. Secreted form generated by cleavage, which acts as a negative regulator of cell adhesion. Promotes the loss of cell adhesion in a cell non-autonomous manner. This chain is Ninjurin-A, found in Drosophila melanogaster (Fruit fly).